The following is a 61-amino-acid chain: Beta-defensin 13 (61 aa).

The first 21 residues, 1 to 21 (MRLLYLLFAAVMLLFLQAVPA), serve as a signal peptide directing secretion. Residues serine 24, arginine 40, histidine 44, asparagine 51, asparagine 53, glycine 54, histidine 58, and lysine 61 each contribute to the a 1,2-diacyl-sn-glycero-3-phosphate site. 3 disulfides stabilise this stretch: cysteine 31–cysteine 59, cysteine 38–cysteine 52, and cysteine 42–cysteine 60.

The protein belongs to the beta-defensin family. Monomeric. Forms multimeric, probably including tetrameric, complexes in the presence of phospholipid phosphatidic acid.

The protein resides in the secreted. In terms of biological role, exhibits antimicrobial activity against fungi. Antimicrobial activity in a pH-dependent manner against the yeast C.albicans; activity is salt tolerant and retains antifungal activity in NaCl concentrations of 100mM. Permeabilizes C.albicans cell membranes via targeting plasma membrane phospholipid phosphatidic acid. In Crocodylus porosus (Saltwater crocodile), this protein is Beta-defensin 13.